The following is a 599-amino-acid chain: MSGPCGEKPVLEASPTMSLWEFEDSHSRQGTPRPGQELAAEEASALELQMKVDFFRKLGYSSTEIHSVLQKLGVQADTNTVLGELVKHGTATERERQTSPDPCPQLPLVPRGGGTPKAPNLEPPLPEEEKEGSDLRPVVIDGSNVAMSHGNKEVFSCRGILLAVNWFLERGHTDITVFVPSWRKEQPRPDVPITDQHILRELEKKKILVFTPSRRVGGKRVVCYDDRFIVKLAYESDGIVVSNDTYRDLQGERQEWKRFIEERLLMYSFVNDKFMPPDDPLGRHGPSLDNFLRKKPLTLEHRKQPCPYGRKCTYGIKCRFFHPERPSCPQRSVADELRANALLSPPRAPSKDKNGRRPSPSSQSSSLLTESEQCSLDGKKLGAQASPGSRQEGLTQTYAPSGRSLAPSGGSGSSFGPTDWLPQTLDSLPYVSQDCLDSGIGSLESQMSELWGVRGGGPGEPGPPRAPYTGYSPYGSELPATAAFSAFGRAMGAGHFSVPADYPPAPPAFPPREYWSEPYPLPPPTSVLQEPPVQSPGAGRSPWGRAGSLAKEQASVYTKLCGVFPPHLVEAVMGRFPQLLDPQQLAAEILSYKSQHPSE.

Residues 1 to 40 form a disordered region; sequence MSGPCGEKPVLEASPTMSLWEFEDSHSRQGTPRPGQELAA. The tract at residues 42-87 is ubiquitin association domain; the sequence is EASALELQMKVDFFRKLGYSSTEIHSVLQKLGVQADTNTVLGELVK. The necessary for interaction with TANK stretch occupies residues 81 to 150; sequence VLGELVKHGT…DGSNVAMSHG (70 aa). The disordered stretch occupies residues 90–133; sequence TATERERQTSPDPCPQLPLVPRGGGTPKAPNLEPPLPEEEKEGS. Ser99 is modified (phosphoserine). The segment at 112–297 is RNase; that stretch reads GGGTPKAPNL…LDNFLRKKPL (186 aa). The RNase NYN domain occupies 135-290; sequence LRPVVIDGSN…LGRHGPSLDN (156 aa). Residues 214–220 are RNA binding; sequence RRVGGKR. Asp226 is a Mg(2+) binding site. The C3H1-type zinc finger occupies 301–324; the sequence is HRKQPCPYGRKCTYGIKCRFFHPE. The segment at 301–457 is necessary for interaction with ZC3H12D; it reads HRKQPCPYGR…SELWGVRGGG (157 aa). The tract at residues 343–420 is disordered; sequence LSPPRAPSKD…SGSSFGPTDW (78 aa). A Phosphoserine modification is found at Ser344. Low complexity predominate over residues 358 to 375; sequence PSPSSQSSSLLTESEQCS. Residues 386–399 show a composition bias toward polar residues; that stretch reads SPGSRQEGLTQTYA. Phosphoserine is present on residues Ser438 and Ser442. Residues 522 to 546 are disordered; sequence PPPTSVLQEPPVQSPGAGRSPWGRA.

The protein belongs to the ZC3H12 family. In terms of assembly, oligomer. Found in a deubiquitination complex with TANK, USP10 and ZC3H12A; this complex inhibits genotoxic stress- or interleukin-1-beta-mediated NF-kappaB activation by promoting IKBKG or TRAF6 deubiquitination. Interacts with IKBKG; this interaction increases in response to DNA damage. Interacts with TANK; this interaction increases in response to DNA damage and serves as a bridge to anchor both TANK and USP10 into a deubiquitinating complex. Interacts with TRAF6; this interaction increases in response to DNA damage and is stimulated by TANK. Interacts with USP10; this interaction increases in response to DNA damage and serves as a bridge to anchor both TANK and USP10 into a deubiquitinating complex. Interacts with ZC3H12D. Interacts with TNRC6A. Interacts with IKBKB/IKKB. Interacts with IKBKB/IKKB. Interacts with BTRC; the interaction occurs when ZC3H12A is phosphorylated in a IKBKB/IKKB-dependent manner. Interacts with IRAK1; this interaction increases the interaction between ZC3H12A and IKBKB/IKKB. Interacts with UPF1; this interaction occurs in a mRNA translationally active- and termination-dependent manner and is essential for ZC3H12A-mediated degradation of target mRNAs. Associates with ribosomes. Interacts with ubiquitin. As to quaternary structure, (Microbial infection) Oligomerization is necessary for antiviral activity. Requires Mg(2+) as cofactor. Post-translationally, phosphorylated by IRAK1; phosphorylation is necessary for subsequent phosphorylation by the I-kappa-B-kinase (IKK) complex. Phosphorylated by I-kappa-B-kinase (IKK) subunits IKBKB/IKKB and CHUK/IKKA at Ser-438 and Ser-442; these phosphorylations promote ubiquitin proteasome-mediated degradation of ZC3H12A and hence facilitates rapid and robust production of IL-6 mRNA in response to toll-like receptor (TLR) or IL-1 receptor stimuli. (Microbial infection) Rapidly degraded in activated T-cells in response to phorbol 13-acetate 12-myristate (PMA) during HIV-1 viral infection. In terms of processing, ubiquitinated; ubiquitination is induced in response to interleukin IL1 receptor stimuli in a IKBKB/IKKB and IRAK1-dependent manner, leading to proteasome-mediated degradation. Post-translationally, proteolytically cleaved between Arg-111 and Arg-214 by MALT1 in activated T-cells; cleavage at Arg-111 is critical for promoting ZC3H12A degradation in response to T-cell receptor (TCR) stimulation, and hence is necessary for prolonging the stability of a set of mRNAs controlling T-cell activation and Th17 cell differentiation. Expressed in heart, placenta, spleen, kidney, liver and lung. Expressed in leukocytes. Expressed in monocyte.

It is found in the nucleus. The protein localises to the cytoplasm. Its subcellular location is the P-body. It localises to the rough endoplasmic reticulum membrane. The protein resides in the cytoplasmic granule. Endoribonuclease involved in various biological functions such as cellular inflammatory response and immune homeostasis, glial differentiation of neuroprogenitor cells, cell death of cardiomyocytes, adipogenesis and angiogenesis. Functions as an endoribonuclease involved in mRNA decay. Modulates the inflammatory response by promoting the degradation of a set of translationally active cytokine-induced inflammation-related mRNAs, such as IL6 and IL12B, during the early phase of inflammation. Prevents aberrant T-cell-mediated immune reaction by degradation of multiple mRNAs controlling T-cell activation, such as those encoding cytokines (IL6 and IL2), cell surface receptors (ICOS, TNFRSF4 and TNFR2) and transcription factor (REL). Inhibits cooperatively with ZC3H12A the differentiation of helper T cells Th17 in lungs. They repress target mRNA encoding the Th17 cell-promoting factors IL6, ICOS, REL, IRF4, NFKBID and NFKBIZ. The cooperation requires RNA-binding by RC3H1 and the nuclease activity of ZC3H12A. Together with RC3H1, destabilizes TNFRSF4/OX40 mRNA by binding to the conserved stem loop structure in its 3'UTR. Self regulates by destabilizing its own mRNA. Cleaves mRNA harboring a stem-loop (SL), often located in their 3'-UTRs, during the early phase of inflammation in a helicase UPF1-dependent manner. Plays a role in the inhibition of microRNAs (miRNAs) biogenesis. Cleaves the terminal loop of a set of precursor miRNAs (pre-miRNAs) important for the regulation of the inflammatory response leading to their degradation, and thus preventing the biosynthesis of mature miRNAs. Also plays a role in promoting angiogenesis in response to inflammatory cytokines by inhibiting the production of antiangiogenic microRNAs via its anti-dicer RNase activity. Affects the overall ubiquitination of cellular proteins. Positively regulates deubiquitinase activity promoting the cleavage at 'Lys-48'- and 'Lys-63'-linked polyubiquitin chains on TNF receptor-associated factors (TRAFs), preventing JNK and NF-kappa-B signaling pathway activation, and hence negatively regulating macrophage-mediated inflammatory response and immune homeostasis. Also induces deubiquitination of the transcription factor HIF1A, probably leading to its stabilization and nuclear import, thereby positively regulating the expression of proangiogenic HIF1A-targeted genes. Involved in a TANK-dependent negative feedback response to attenuate NF-kappaB activation through the deubiquitination of IKBKG or TRAF6 in response to interleukin-1-beta (IL1B) stimulation or upon DNA damage. Prevents stress granule (SGs) formation and promotes macrophage apoptosis under stress conditions, including arsenite-induced oxidative stress, heat shock and energy deprivation. Plays a role in the regulation of macrophage polarization; promotes IL4-induced polarization of macrophages M1 into anti-inflammatory M2 state. May also act as a transcription factor that regulates the expression of multiple genes involved in inflammatory response, angiogenesis, adipogenesis and apoptosis. Functions as a positive regulator of glial differentiation of neuroprogenitor cells through an amyloid precursor protein (APP)-dependent signaling pathway. Attenuates septic myocardial contractile dysfunction in response to lipopolysaccharide (LPS) by reducing I-kappa-B-kinase (IKK)-mediated NF-kappa-B activation, and hence myocardial pro-inflammatory cytokine production. Functionally, (Microbial infection) Binds to Japanese encephalitis virus (JEV) and Dengue virus (DEN) RNAs. In terms of biological role, (Microbial infection) Exhibits antiviral activity against HIV-1 in lymphocytes by decreasing the abundance of HIV-1 viral RNA species. The sequence is that of Endoribonuclease ZC3H12A from Homo sapiens (Human).